Consider the following 71-residue polypeptide: UPF0346 protein SPP_0954 (71 aa).

This sequence belongs to the UPF0346 family.

This Streptococcus pneumoniae (strain P1031) protein is UPF0346 protein SPP_0954.